Consider the following 457-residue polypeptide: GTPase Der (457 aa).

EngA-type G domains lie at 4-169 and 177-352; these read PTIA…PENN and IMMS…NQHR. GTP-binding positions include 10 to 17, 57 to 61, 120 to 123, 183 to 190, 230 to 234, and 295 to 298; these read GRPNVGKS, DTGGL, NKCE, DTAGI, and NKWD. The KH-like domain maps to 353–438; that stretch reads RRVTTSVVNE…PLILLWRGKQ (86 aa).

This sequence belongs to the TRAFAC class TrmE-Era-EngA-EngB-Septin-like GTPase superfamily. EngA (Der) GTPase family. In terms of assembly, associates with the 50S ribosomal subunit.

In terms of biological role, GTPase that plays an essential role in the late steps of ribosome biogenesis. The chain is GTPase Der from Prochlorococcus marinus (strain AS9601).